The chain runs to 524 residues: Light-independent protochlorophyllide reductase subunit B (524 aa).

D36 lines the [4Fe-4S] cluster pocket. The active-site Proton donor is D290. Residue 425 to 426 (GL) participates in substrate binding.

It belongs to the ChlB/BchB/BchZ family. Protochlorophyllide reductase is composed of three subunits; ChlL, ChlN and ChlB. Forms a heterotetramer of two ChlB and two ChlN subunits. The cofactor is [4Fe-4S] cluster.

The enzyme catalyses chlorophyllide a + oxidized 2[4Fe-4S]-[ferredoxin] + 2 ADP + 2 phosphate = protochlorophyllide a + reduced 2[4Fe-4S]-[ferredoxin] + 2 ATP + 2 H2O. The protein operates within porphyrin-containing compound metabolism; chlorophyll biosynthesis (light-independent). Functionally, component of the dark-operative protochlorophyllide reductase (DPOR) that uses Mg-ATP and reduced ferredoxin to reduce ring D of protochlorophyllide (Pchlide) to form chlorophyllide a (Chlide). This reaction is light-independent. The NB-protein (ChlN-ChlB) is the catalytic component of the complex. In Parasynechococcus marenigrum (strain WH8102), this protein is Light-independent protochlorophyllide reductase subunit B.